Here is a 336-residue protein sequence, read N- to C-terminus: F420-dependent glucose-6-phosphate dehydrogenase (336 aa).

Asp39 contacts coenzyme F420-(gamma-Glu)n. The Proton donor role is filled by His40. Coenzyme F420-(gamma-Glu)n is bound by residues Thr76 and 107 to 108; that span reads TG. Glu109 functions as the Proton acceptor in the catalytic mechanism. Coenzyme F420-(gamma-Glu)n contacts are provided by residues Asn112, 177 to 178, and 180 to 181; these read GG and EV. Substrate-binding residues include Thr195, Lys198, Lys259, and Arg283.

This sequence belongs to the F420-dependent glucose-6-phosphate dehydrogenase family. Homodimer.

The enzyme catalyses oxidized coenzyme F420-(gamma-L-Glu)(n) + D-glucose 6-phosphate + H(+) = 6-phospho-D-glucono-1,5-lactone + reduced coenzyme F420-(gamma-L-Glu)(n). Its function is as follows. Catalyzes the coenzyme F420-dependent oxidation of glucose 6-phosphate (G6P) to 6-phosphogluconolactone. Appears to have a role in resistance to oxidative stress, via its consumption of G6P that serves as a source of reducing power to combat oxidative stress in mycobacteria. This chain is F420-dependent glucose-6-phosphate dehydrogenase, found in Mycobacterium leprae (strain Br4923).